We begin with the raw amino-acid sequence, 323 residues long: o-succinylbenzoate synthase (323 aa).

The active-site Proton donor is Lys134. Residues Asp162, Glu191, and Asp214 each contribute to the Mg(2+) site. Lys236 (proton acceptor) is an active-site residue.

Belongs to the mandelate racemase/muconate lactonizing enzyme family. MenC type 1 subfamily. A divalent metal cation serves as cofactor.

The enzyme catalyses (1R,6R)-6-hydroxy-2-succinyl-cyclohexa-2,4-diene-1-carboxylate = 2-succinylbenzoate + H2O. Its pathway is quinol/quinone metabolism; 1,4-dihydroxy-2-naphthoate biosynthesis; 1,4-dihydroxy-2-naphthoate from chorismate: step 4/7. It participates in quinol/quinone metabolism; menaquinone biosynthesis. Converts 2-succinyl-6-hydroxy-2,4-cyclohexadiene-1-carboxylate (SHCHC) to 2-succinylbenzoate (OSB). This is o-succinylbenzoate synthase from Photorhabdus laumondii subsp. laumondii (strain DSM 15139 / CIP 105565 / TT01) (Photorhabdus luminescens subsp. laumondii).